The chain runs to 141 residues: Hemoglobin subunit alpha-D (141 aa).

Residues 1–141 (MLTAEDKKLI…VAAVLAEKYR (141 aa)) form the Globin domain. 2 residues coordinate heme b: His58 and His87.

This sequence belongs to the globin family. As to quaternary structure, heterotetramer of two alpha-D chains and two beta chains. Red blood cells.

Its function is as follows. Involved in oxygen transport from the lung to the various peripheral tissues. This chain is Hemoglobin subunit alpha-D (HBAD), found in Cairina moschata (Muscovy duck).